Reading from the N-terminus, the 273-residue chain is NH(3)-dependent NAD(+) synthetase (273 aa).

ATP is bound at residue 47-54; the sequence is GISGGQDS. Mg(2+) is bound at residue Asp-53. Arg-139 provides a ligand contact to deamido-NAD(+). ATP is bound at residue Thr-159. Glu-164 serves as a coordination point for Mg(2+). Deamido-NAD(+) contacts are provided by Lys-172 and Asp-179. ATP contacts are provided by Lys-188 and Thr-210. 259–260 contributes to the deamido-NAD(+) binding site; sequence HK.

Belongs to the NAD synthetase family. As to quaternary structure, homodimer.

The catalysed reaction is deamido-NAD(+) + NH4(+) + ATP = AMP + diphosphate + NAD(+) + H(+). It functions in the pathway cofactor biosynthesis; NAD(+) biosynthesis; NAD(+) from deamido-NAD(+) (ammonia route): step 1/1. Catalyzes the ATP-dependent amidation of deamido-NAD to form NAD. Uses ammonia as a nitrogen source. In Staphylococcus haemolyticus (strain JCSC1435), this protein is NH(3)-dependent NAD(+) synthetase.